The sequence spans 300 residues: Cation-efflux pump FieF (300 aa).

The helical transmembrane segment at Leu-24 to Val-44 threads the bilayer. Positions 45 and 49 each coordinate Zn(2+). 2 helical membrane passes run Ala-82–Ile-102 and Pro-114–Phe-134. Zn(2+) is bound by residues His-153 and Asp-157. The next 2 membrane-spanning stretches (helical) occupy residues Ser-156–His-176 and Ala-178–Gly-198.

It belongs to the cation diffusion facilitator (CDF) transporter (TC 2.A.4) family. FieF subfamily. In terms of assembly, homodimer.

The protein localises to the cell inner membrane. The catalysed reaction is Zn(2+)(in) + H(+)(out) = Zn(2+)(out) + H(+)(in). It carries out the reaction Cd(2+)(in) + H(+)(out) = Cd(2+)(out) + H(+)(in). The enzyme catalyses Fe(2+)(in) + H(+)(out) = Fe(2+)(out) + H(+)(in). Divalent metal cation transporter which exports Zn(2+), Cd(2+) and possibly Fe(2+). May be involved in zinc and iron detoxification by efflux. This chain is Cation-efflux pump FieF, found in Salmonella choleraesuis (strain SC-B67).